We begin with the raw amino-acid sequence, 408 residues long: LIN1-like protein (408 aa).

Positions 1–161 are disordered; the sequence is MKRTLRNPGN…SVPSSPKRMS (161 aa). Residues 41-52 show a composition bias toward acidic residues; it reads YYESESEEDEDQ. 3 stretches are compositionally biased toward basic and acidic residues: residues 53 to 62, 73 to 109, and 119 to 129; these read ILNKEKKEGQ, DEKRTLPNDEAQKRRDFIENGDAERLAHKGLRNKEVL, and NGKYSKLRYED. The GYF domain maps to 344–402; the sequence is SSQYNFKWEFDDKTYGPYTASQIQAWSNEGYFTDAKHAAFIQLANMDEWMYPNNICFCD.

The protein belongs to the LIN1 family.

This chain is LIN1-like protein, found in Schizosaccharomyces pombe (strain 972 / ATCC 24843) (Fission yeast).